Reading from the N-terminus, the 919-residue chain is MATTPDAAFEALMNGVTSWDLPKEFTPSELLLIGEAAFPVMVNDKGQVLIAVSFYGQGRLVVVSHESYLMHAGLAPFLLNAVSWLCPSPGTPIEVHSSLASLVNILRGSGINALVQPEPGEALGVYCIDAYNDTLTKKLVQFVKRGGGLLIGGQAWNWASQHGSDKVLFSFPGNKVTSVAGVYFTDVYGDINRFKVSKKIPKIPLYIRCWEELRHDQDQLLDGISMLDVRTGGVPSQLLVHGSLAFPLGLDNSFLSCFLAAAHYGRGRVVLAAHEAMLCAPKMEPFLLNAIRWLSRGQEDNIGVNTRLKNLNSLLLKHGLKCSLESHLTDDMCVYCCAAYSDQEAKKIQEFVAEGGGLLIGGQSWWWASQNPGSSALGSFPGNVILNTFGLSILPRTVSPGCFPILHIDIRNYHFRGALSEFQAMLNHKEGNLEKRYSGKLGVDGAGFLQIPAQGVPAYLSVHRILRKILRQAGLPAVSKSNPVSSHSYEAAILQLATELAHSGSDCSQIAHNLSSQTCSSNLSSSEHPITVEINGTNPGDRDVWMSTGLYLLEGQSTEISVSEPAASAGLKVQIGCHTDDLTFAIKLFRAPVVTYQCCMNRTQRSVSCLWGGLLYIIVPKGCQLGPVSVTITNAVPAPYYKLGKTSLEEWKSCIQKNLGPWGELATDNVILTVPTASLKTLENPEPLLQLWDEMMQAVARLASQPFPFQRPERIVADVQLSAGWMHSGYPIMCHMESVQELVSLANIRSKGLWGPIHELGHNQQCRGWEFPPHTTEATCNLWSVYVHETVLGIPRAQAHPQLKPEEREKRIKEHLQKGAPLQNWNVWTALETYLQLQEVFGWEPFITLFAEYQTIFYIPEDNECKMNIWLKLFSEKVQKNLVPFFEAWGWPIQKDVAEDLACYPSWEDHPLRMYMGSE.

Residues 543-842 (DVWMSTGLYL…TYLQLQEVFG (300 aa)) form the Peptidase M60 domain.

This sequence belongs to the TCAF family. Interacts with TRPM8 (via N-terminus and C-terminus domains); the interaction inhibits TRPM8 channel activity. Interacts with TRPV6.

The protein resides in the cell membrane. Functionally, negatively regulates the plasma membrane cation channel TRPM8 activity. Involved in the recruitment of TRPM8 to the cell surface. Promotes prostate cancer cell migration stimulation in a TRPM8-dependent manner. The sequence is that of TRPM8 channel-associated factor 2 from Mus musculus (Mouse).